Here is a 146-residue protein sequence, read N- to C-terminus: Snaclec alboaggregin-B subunit beta (146 aa).

The first 23 residues, 1–23, serve as a signal peptide directing secretion; it reads MGRFIFGSFGLLVLFLSLSGTGA. The region spanning 24–143 is the C-type lectin domain; that stretch reads DCPSDWSSYD…CSRTYPFVCK (120 aa). 3 disulfides stabilise this stretch: C25–C36, C53–C142, and C119–C134.

Belongs to the snaclec family. In terms of assembly, heterodimer of subunits alpha and beta; disulfide-linked. As to expression, expressed by the venom gland.

The protein resides in the secreted. In terms of biological role, weakly agglutinates platelets at high doses by binding to GPIbalpha (GP1BA). This chain is Snaclec alboaggregin-B subunit beta, found in Trimeresurus albolabris (White-lipped pit viper).